A 216-amino-acid polypeptide reads, in one-letter code: Pyridoxine/pyridoxamine 5'-phosphate oxidase (216 aa).

Substrate contacts are provided by residues 9-12 (RLSY) and Arg67. FMN is bound by residues 62–67 (RIVLLR), 77–78 (YT), Lys84, and Gln106. Substrate is bound by residues Tyr124, Arg128, and Ser132. FMN-binding positions include 142 to 143 (QS) and Trp188. A substrate-binding site is contributed by 194-196 (RMH). Arg198 contributes to the FMN binding site.

This sequence belongs to the pyridoxamine 5'-phosphate oxidase family. In terms of assembly, homodimer. Requires FMN as cofactor.

The catalysed reaction is pyridoxamine 5'-phosphate + O2 + H2O = pyridoxal 5'-phosphate + H2O2 + NH4(+). The enzyme catalyses pyridoxine 5'-phosphate + O2 = pyridoxal 5'-phosphate + H2O2. Its pathway is cofactor metabolism; pyridoxal 5'-phosphate salvage; pyridoxal 5'-phosphate from pyridoxamine 5'-phosphate: step 1/1. It participates in cofactor metabolism; pyridoxal 5'-phosphate salvage; pyridoxal 5'-phosphate from pyridoxine 5'-phosphate: step 1/1. In terms of biological role, catalyzes the oxidation of either pyridoxine 5'-phosphate (PNP) or pyridoxamine 5'-phosphate (PMP) into pyridoxal 5'-phosphate (PLP). This chain is Pyridoxine/pyridoxamine 5'-phosphate oxidase, found in Psychrobacter arcticus (strain DSM 17307 / VKM B-2377 / 273-4).